The sequence spans 259 residues: Protein unc-50 homolog B (259 aa).

The span at 1–11 shows a compositional bias: polar residues; it reads MLPTTSVSPRS. The interval 1-21 is disordered; it reads MLPTTSVSPRSPDNGILSPRD. Residues 1–82 are Cytoplasmic-facing; sequence MLPTTSVSPR…TKDQWARDDP (82 aa). The helical transmembrane segment at 83–103 threads the bilayer; that stretch reads AFLVLLGIWLCVSTVGFGFVL. At 104 to 109 the chain is on the lumenal side; the sequence is DMSFFE. A helical transmembrane segment spans residues 110–130; the sequence is TFTLLLWVVFIDCVGVGLLIA. Residues 131–158 are Cytoplasmic-facing; it reads TSMWFVSNKYMVNRQGKDYDVEWGYTFD. A helical transmembrane segment spans residues 159-179; it reads VHLNAFYPLLVILHFIQLFFI. At 180–181 the chain is on the lumenal side; it reads NH. A helical transmembrane segment spans residues 182 to 202; the sequence is VILTGWFIGCFVGNTLWLIAI. Residues 203 to 222 are Cytoplasmic-facing; sequence GYYIYITFLGYSALPFLKNT. Residues 223-243 form a helical membrane-spanning segment; it reads VVLLYPFAALALLYILSLALG. At 244-259 the chain is on the lumenal side; sequence WNFTAKLCLFYKYRVR.

It belongs to the unc-50 family.

It is found in the nucleus inner membrane. The protein resides in the golgi apparatus membrane. Involved in the cell surface expression of neuronal nicotinic receptors. Binds RNA. The sequence is that of Protein unc-50 homolog B (unc50-b) from Xenopus laevis (African clawed frog).